The sequence spans 439 residues: Paraneoplastic antigen-like protein 8A (439 aa).

A disordered region spans residues 213–439; sequence ETPNNWNATE…RRATNESRKV (227 aa). Residues 231–249 are compositionally biased toward basic residues; that stretch reads LVRRAGAKSRSRRKKQKKN. A compositionally biased stretch (polar residues) spans 403–419; it reads KAPQGQQPAEATASTSR. Basic and acidic residues predominate over residues 423–439; that stretch reads AKPEGSPRRATNESRKV.

The protein belongs to the PNMA family.

The sequence is that of Paraneoplastic antigen-like protein 8A (PNMA8A) from Pongo abelii (Sumatran orangutan).